A 609-amino-acid polypeptide reads, in one-letter code: Adagio protein 1 (609 aa).

Low complexity predominate over residues 1–17; that stretch reads MEWDSGSDLSADDASSL. The interval 1–24 is disordered; it reads MEWDSGSDLSADDASSLADDEEGG. One can recognise a PAS domain in the interval 32–114; that stretch reads IPYPVGNLLH…SEIRKCIDEG (83 aa). S-4a-FMN cysteine is present on Cys-82. Residues 118–161 form the PAC domain; that stretch reads QGELLNFRKDGSPLMNRLRLTPIYGDDDTITHIIGIQFFIETDI. Residues 195–241 form the F-box domain; it reads CGLFQLSDEVVSMKILSRLTPRDVASVSSVCRRLYVLTKNEDLWRRV. Kelch repeat units follow at residues 292–342, 345–392, 397–445, 450–501, and 516–564; these read SRCN…SSPP, RWGH…SGLA, RSWH…PAAW, RLGH…TGSG, and RLDH…NIPG.

It belongs to the ADAGIO family. Interacts with NFXL2. Interacts (via N-terminus) with GI and (via Kelch repeats) with ADO3. Component of an E3 ubiquitin ligase SCF(ADO1) complex composed of SKP1A/ASK1 (or SKP1B/ASK2), CUL1, RBX1 and ADO1. Also interacts with SKP1D/ASK4, SKP1K/ASK11, CRY1, PHYB, APRR1 and APRR5, and probably with SKP1N/ASK14 and SKP1S/ASK19. Post-translationally, may be ubiquitinated. Degraded in a proteasome-dependent manner. FMN binds covalently to cysteine after exposure to blue light and is reversed in the dark. As to expression, ubiquitously expressed with higher levels in cotyledons and leaves.

It localises to the nucleus. The protein localises to the cytoplasm. It functions in the pathway protein modification; protein ubiquitination. Functionally, component of an E3 ubiquitin ligase complex that plays a central role in blue light-dependent circadian cycles. Acts as a blue light photoreceptor, due to the presence of FMN, that mediates light-regulated protein degradation of critical clock components by targeting them to the proteasome complex. The SCF(ADO1) E3 ubiquitin ligase complex is involved in the regulation of circadian clock-dependent processes including the transition to flowering time, hypocotyl elongation, cotyledons and leaf movement rhythms. APRR1/TOC1 and APRR5, but not 'GIGANTEA', are proteolytic substrates of this ubiquitin ligase complex. Blue light enhances cooperative stabilization of 'GIGANTEA' and ADO1/ZTL, leading to amplification and sharpening of the expression profile of APRR1/TOC1. ADO1/ZTL interacts with ADO3, preventing the interaction of ADO3 with CDF1. This Arabidopsis thaliana (Mouse-ear cress) protein is Adagio protein 1 (ADO1).